We begin with the raw amino-acid sequence, 293 residues long: Undecaprenyl-diphosphatase (293 aa).

A run of 5 helical transmembrane segments spans residues 107–127 (WMIIVATIPVVVLGVLGKDLI), 134–154 (MWITATVLVLFSFVFILAEKV), 207–227 (FSFLLAIPAVLGSGLYSLPDA), 243–263 (IGTLVAFLVGYASIAWLMKFV), and 268–288 (FSWFAAYRIPAGLLVMLLLWL).

Belongs to the UppP family.

The protein resides in the cell membrane. The enzyme catalyses di-trans,octa-cis-undecaprenyl diphosphate + H2O = di-trans,octa-cis-undecaprenyl phosphate + phosphate + H(+). Functionally, catalyzes the dephosphorylation of undecaprenyl diphosphate (UPP). Confers resistance to bacitracin. This Corynebacterium efficiens (strain DSM 44549 / YS-314 / AJ 12310 / JCM 11189 / NBRC 100395) protein is Undecaprenyl-diphosphatase.